The primary structure comprises 183 residues: UPF0397 protein stu0306/stu0307 (183 aa).

Transmembrane regions (helical) follow at residues 11 to 31 (ATGI…IPIF), 44 to 64 (VLFS…GFIG), 74 to 94 (GDIS…IGLF), 111 to 131 (IWFN…VTPI), and 149 to 169 (FVAG…LLAI).

The protein belongs to the UPF0397 family.

It is found in the cell membrane. This chain is UPF0397 protein stu0306/stu0307, found in Streptococcus thermophilus (strain ATCC BAA-250 / LMG 18311).